The following is a 481-amino-acid chain: Glutamyl-tRNA(Gln) amidotransferase subunit A (481 aa).

Catalysis depends on charge relay system residues Lys-76 and Ser-151. Catalysis depends on Ser-175, which acts as the Acyl-ester intermediate.

Belongs to the amidase family. GatA subfamily. As to quaternary structure, heterotrimer of A, B and C subunits.

It carries out the reaction L-glutamyl-tRNA(Gln) + L-glutamine + ATP + H2O = L-glutaminyl-tRNA(Gln) + L-glutamate + ADP + phosphate + H(+). Functionally, allows the formation of correctly charged Gln-tRNA(Gln) through the transamidation of misacylated Glu-tRNA(Gln) in organisms which lack glutaminyl-tRNA synthetase. The reaction takes place in the presence of glutamine and ATP through an activated gamma-phospho-Glu-tRNA(Gln). The protein is Glutamyl-tRNA(Gln) amidotransferase subunit A of Neisseria meningitidis serogroup A / serotype 4A (strain DSM 15465 / Z2491).